Reading from the N-terminus, the 471-residue chain is Lincomycin resistance protein LmrB (471 aa).

The next 12 helical transmembrane spans lie at 13–35 (PIPI…TALN), 55–77 (LTTG…LQWF), 84–106 (FTAV…FAML), 111–133 (VVQA…LIFP), 140–162 (AMGM…SGLI), 167–189 (TWNW…GMKF), 201–223 (IDIL…FSSA), 227–249 (GWGS…LFVW), 269–291 (FTLG…ILLP), 329–351 (AYGP…FFLT), 358–380 (SALT…MMPA), and 445–467 (GIQN…SLFI).

The protein belongs to the major facilitator superfamily. EmrB family.

It is found in the cell membrane. Functionally, proton-dependent transporter. May mediate the efflux of lincomycin. This chain is Lincomycin resistance protein LmrB (lmrB), found in Listeria monocytogenes serovar 1/2a (strain ATCC BAA-679 / EGD-e).